We begin with the raw amino-acid sequence, 294 residues long: Golgi to ER traffic protein 2 (294 aa).

Residues 1 to 104 (MSSELSETEK…QATSPQETID (104 aa)) form a disordered region. Topologically, residues 1–166 (MSSELSETEK…LDYNNYLINN (166 aa)) are cytoplasmic. The segment covering 12–21 (KLIRERRQKK) has biased composition (basic residues). Residues 34 to 65 (ITGQAENSQLDTESPLDSKSSRETTPTVTKVD) are compositionally biased toward polar residues. A compositionally biased stretch (basic and acidic residues) spans 85–95 (KVEKSQKKKEQ). The helical transmembrane segment at 167–187 (LKVWSIIFKWCFFLIPYLFAL) threads the bilayer. The Lumenal portion of the chain corresponds to 188-205 (TRSEPISFLPEQFSNPSN). A helical membrane pass occupies residues 206–225 (FFMIFLSFEIVATSIYFQKL). The Cytoplasmic portion of the chain corresponds to 226-272 (QNIEKSNKINGFQSNNKIVNLVSLIPEGVLPVPDIKGKVIMALQYWD). Residues 273–293 (VFSMFLTDICFVLVMMGLFKL) traverse the membrane as a helical segment. Position 294 (I294) is a topological domain, lumenal.

It belongs to the GET2 family. As to quaternary structure, component of the Golgi to ER traffic (GET) complex, which is composed of GET1, GET2 and GET3. Within the complex, GET1 and GET2 form a heterotetramer which is stabilized by phosphatidylinositol binding and which binds to the GET3 homodimer.

It localises to the endoplasmic reticulum membrane. It is found in the golgi apparatus membrane. Functionally, required for the post-translational delivery of tail-anchored (TA) proteins to the endoplasmic reticulum. Together with GET1, acts as a membrane receptor for soluble GET3, which recognizes and selectively binds the transmembrane domain of TA proteins in the cytosol. The GET complex cooperates with the HDEL receptor ERD2 to mediate the ATP-dependent retrieval of resident ER proteins that contain a C-terminal H-D-E-L retention signal from the Golgi to the ER. In Vanderwaltozyma polyspora (strain ATCC 22028 / DSM 70294 / BCRC 21397 / CBS 2163 / NBRC 10782 / NRRL Y-8283 / UCD 57-17) (Kluyveromyces polysporus), this protein is Golgi to ER traffic protein 2.